Consider the following 191-residue polypeptide: Glucose-6-phosphate 1-dehydrogenase (191 aa).

Residue Ala-2 is modified to N-acetylalanine. Ser-8 is subject to Phosphoserine. Thr-10 is subject to Phosphothreonine. Residues 38–45 (GASGDLAK) and Tyr-86 each bind NADP(+). Asp-101 serves as a coordination point for D-glucose 6-phosphate. The Proton acceptor role is filled by His-106. Position 163 (Arg-163) interacts with NADP(+). Position 173 is an N6-acetyllysine (Lys-173). NADP(+) is bound by residues Tyr-179 and Trp-185. Tyr-179 carries the phosphotyrosine modification.

Belongs to the glucose-6-phosphate dehydrogenase family. Homotetramer; dimer of dimers. Interacts with SIRT2; the interaction is enhanced by H(2)O(2) treatment. Forms a ternary complex with ALDOB and TP53; this interaction is direct. ALDOB stabilizes the complex inhibiting G6PD activity and keeping oxidative pentose phosphate metabolism in check. Post-translationally, acetylated by ELP3; acetylation inhibits its homodimerization and enzyme activity. Deacetylated by SIRT2; deacetylation stimulates its enzyme activity.

It localises to the cytoplasm. Its subcellular location is the cytosol. The protein localises to the membrane. The catalysed reaction is D-glucose 6-phosphate + NADP(+) = 6-phospho-D-glucono-1,5-lactone + NADPH + H(+). Its pathway is carbohydrate degradation; pentose phosphate pathway; D-ribulose 5-phosphate from D-glucose 6-phosphate (oxidative stage): step 1/3. Functionally, cytosolic glucose-6-phosphate dehydrogenase that catalyzes the first and rate-limiting step of the oxidative branch within the pentose phosphate pathway/shunt, an alternative route to glycolysis for the dissimilation of carbohydrates and a major source of reducing power and metabolic intermediates for fatty acid and nucleic acid biosynthetic processes. The chain is Glucose-6-phosphate 1-dehydrogenase (G6PD) from Didelphis virginiana (North American opossum).